The primary structure comprises 429 residues: Ribosomal RNA small subunit methyltransferase B (429 aa).

S-adenosyl-L-methionine contacts are provided by residues 254-260 (CAAPGGK), Asp277, Asp303, and Asp322. The active-site Nucleophile is Cys375.

This sequence belongs to the class I-like SAM-binding methyltransferase superfamily. RsmB/NOP family.

The protein resides in the cytoplasm. The catalysed reaction is cytidine(967) in 16S rRNA + S-adenosyl-L-methionine = 5-methylcytidine(967) in 16S rRNA + S-adenosyl-L-homocysteine + H(+). Specifically methylates the cytosine at position 967 (m5C967) of 16S rRNA. The polypeptide is Ribosomal RNA small subunit methyltransferase B (Shigella boydii serotype 18 (strain CDC 3083-94 / BS512)).